The following is a 71-amino-acid chain: Pre-hexon-linking protein VIII (71 aa).

Belongs to the adenoviridae hexon-linking protein family. In terms of assembly, interacts with the peripentonal hexons as well as the hexons in the facets. Part of a complex composed of the core-capsid bridging protein, the endosome lysis protein VI and the hexon-linking protein VIII; these interactions bridge the virus core to the capsid. Cleaved by the viral protease during virion maturation. May cause the middle segment to be shed from the capsid.

The protein resides in the host nucleus. It localises to the virion. Structural component of the virion that acts as a cement protein on the capsid interior and which glue the peripentonal hexons and group-of-nine hexons together. This Canine adenovirus serotype 1 (strain Glaxo) (CAdV-1) protein is Pre-hexon-linking protein VIII.